Reading from the N-terminus, the 406-residue chain is Argininosuccinate synthase (406 aa).

ATP is bound by residues 12-20 (AYSGGLDTS) and A39. Positions 90 and 95 each coordinate L-citrulline. G120 is an ATP binding site. L-aspartate-binding residues include T122, N126, and D127. An L-citrulline-binding site is contributed by N126. Residues R130, S179, S188, E264, and Y276 each coordinate L-citrulline.

Belongs to the argininosuccinate synthase family. Type 1 subfamily. As to quaternary structure, homotetramer.

It is found in the cytoplasm. The enzyme catalyses L-citrulline + L-aspartate + ATP = 2-(N(omega)-L-arginino)succinate + AMP + diphosphate + H(+). It functions in the pathway amino-acid biosynthesis; L-arginine biosynthesis; L-arginine from L-ornithine and carbamoyl phosphate: step 2/3. The protein is Argininosuccinate synthase of Citrifermentans bemidjiense (strain ATCC BAA-1014 / DSM 16622 / JCM 12645 / Bem) (Geobacter bemidjiensis).